The chain runs to 227 residues: Urease accessory protein UreF (227 aa).

Belongs to the UreF family. In terms of assembly, ureD, UreF and UreG form a complex that acts as a GTP-hydrolysis-dependent molecular chaperone, activating the urease apoprotein by helping to assemble the nickel containing metallocenter of UreC. The UreE protein probably delivers the nickel.

It is found in the cytoplasm. Its function is as follows. Required for maturation of urease via the functional incorporation of the urease nickel metallocenter. This is Urease accessory protein UreF from Methylobacillus flagellatus (strain ATCC 51484 / DSM 6875 / VKM B-1610 / KT).